We begin with the raw amino-acid sequence, 87 residues long: Cell division topological specificity factor (87 aa).

This sequence belongs to the MinE family.

Prevents the cell division inhibition by proteins MinC and MinD at internal division sites while permitting inhibition at polar sites. This ensures cell division at the proper site by restricting the formation of a division septum at the midpoint of the long axis of the cell. The protein is Cell division topological specificity factor of Clostridium botulinum (strain ATCC 19397 / Type A).